The following is a 1038-amino-acid chain: Bone morphogenetic protein receptor type-2 (1038 aa).

The first 26 residues, 1-26 (MTSSLQRPWRVPWLPWTILLVSTAAA), serve as a signal peptide directing secretion. Residues 27 to 150 (SQNQERLCAF…PPHSFNRDET (124 aa)) are Extracellular-facing. Cystine bridges form between Cys34/Cys66, Cys60/Cys84, Cys94/Cys117, Cys99/Cys116, and Cys118/Cys123. Asn55 carries N-linked (GlcNAc...) asparagine glycosylation. The N-linked (GlcNAc...) asparagine glycan is linked to Asn110. Asn126 carries N-linked (GlcNAc...) asparagine glycosylation. The helical transmembrane segment at 151 to 171 (IIIALASVSVLAVLIVALCFG) threads the bilayer. Residues 172 to 1038 (YRMLTGDRKQ…VSKDIGMNCL (867 aa)) lie on the Cytoplasmic side of the membrane. The Protein kinase domain occupies 203 to 504 (LKLLELIGRG…QCAEERMAEL (302 aa)). Residues 209–217 (IGRGRYGAV), Lys230, and 280–282 (EYY) contribute to the ATP site. Catalysis depends on Asp333, which acts as the Proton acceptor. ATP contacts are provided by residues 337-338 (RN) and Asp351. The residue at position 379 (Thr379) is a Phosphothreonine. The residue at position 586 (Ser586) is a Phosphoserine. The tract at residues 593–626 (QAQARIPSPETSVTSLSTNTTTTNTTGLTPSTGM) is disordered. A compositionally biased stretch (low complexity) spans 603–626 (TSVTSLSTNTTTTNTTGLTPSTGM). Residues Ser680 and Ser681 each carry the phosphoserine modification. Disordered regions lie at residues 746 to 770 (PKQQ…KEPR) and 872 to 972 (RREQ…EKIK). Basic and acidic residues predominate over residues 872-896 (RREQQAGHDEGVLDRLVDRRERPLE). A compositionally biased stretch (polar residues) spans 937 to 964 (RPNSLDLSATNVLDGSSIQIGESTQDGK).

This sequence belongs to the protein kinase superfamily. TKL Ser/Thr protein kinase family. TGFB receptor subfamily. Interacts with GDF5. Interacts with BMP4. Interacts with SCUBE3. Interacts with TSC22D1/TSC-22. Interacts with activin A/INHBA. The cofactor is Mg(2+). It depends on Mn(2+) as a cofactor. In terms of tissue distribution, highly expressed in heart and liver.

The protein localises to the cell membrane. It catalyses the reaction L-threonyl-[receptor-protein] + ATP = O-phospho-L-threonyl-[receptor-protein] + ADP + H(+). The catalysed reaction is L-seryl-[receptor-protein] + ATP = O-phospho-L-seryl-[receptor-protein] + ADP + H(+). On ligand binding, forms a receptor complex consisting of two type II and two type I transmembrane serine/threonine kinases. Type II receptors phosphorylate and activate type I receptors which autophosphorylate, then bind and activate SMAD transcriptional regulators. Can also mediate signaling through the activation of the p38MAPK cascade. Binds to BMP7, BMP2 and, less efficiently, BMP4. Binding is weak but enhanced by the presence of type I receptors for BMPs. Mediates induction of adipogenesis by GDF6. Promotes signaling also by binding to activin A/INHBA. This is Bone morphogenetic protein receptor type-2 (BMPR2) from Homo sapiens (Human).